A 63-amino-acid polypeptide reads, in one-letter code: Small ribosomal subunit protein eS17 (63 aa).

This sequence belongs to the eukaryotic ribosomal protein eS17 family.

The sequence is that of Small ribosomal subunit protein eS17 from Methanococcus maripaludis (strain C7 / ATCC BAA-1331).